A 205-amino-acid polypeptide reads, in one-letter code: Spermatogenesis-associated protein 24 (205 aa).

Residues 17 to 166 (LAFDQLRDVI…QQKQIFRNHM (150 aa)) adopt a coiled-coil conformation. Positions 138–185 (EDILNGKENEIKELQQVISQQKQIFRNHMSDFRIQKQQESYMAQVLDQ) are required for interaction with CBX5 and TBPL1. A disordered region spans residues 180-205 (AQVLDQKHKKASGTRQAHSHQHPREK). The span at 186–205 (KHKKASGTRQAHSHQHPREK) shows a compositional bias: basic residues.

The protein belongs to the SPATA24 family. As to quaternary structure, homodimer. Interacts with CBX3, CBX5, GMNN, GTF2B, TBPL1 and the polycomb proteins PHCF2, RNF2 and SCMH1 but not with CBX1 or PCGF2.

The protein resides in the cytoplasm. It is found in the nucleus. Its subcellular location is the nucleolus. The protein localises to the nucleoplasm. In terms of biological role, binds DNA with high affinity but does not bind to TATA boxes. Synergises with GMNN and TBP in activation of TATA box-containing promoters and with GMNN and TBPL1 in activation of the NF1 TATA-less promoter. May play a role in cytoplasm movement and removal during spermiogenesis. The protein is Spermatogenesis-associated protein 24 (SPATA24) of Macaca fascicularis (Crab-eating macaque).